We begin with the raw amino-acid sequence, 500 residues long: 4-alpha-glucanotransferase (500 aa).

The protein belongs to the disproportionating enzyme family.

It localises to the cytoplasm. The catalysed reaction is Transfers a segment of a (1-&gt;4)-alpha-D-glucan to a new position in an acceptor, which may be glucose or a (1-&gt;4)-alpha-D-glucan.. The chain is 4-alpha-glucanotransferase (malQ) from Thermus thermophilus.